The following is a 420-amino-acid chain: Histidine--tRNA ligase (420 aa).

It belongs to the class-II aminoacyl-tRNA synthetase family. As to quaternary structure, homodimer.

It is found in the cytoplasm. The enzyme catalyses tRNA(His) + L-histidine + ATP = L-histidyl-tRNA(His) + AMP + diphosphate + H(+). The sequence is that of Histidine--tRNA ligase from Staphylococcus saprophyticus subsp. saprophyticus (strain ATCC 15305 / DSM 20229 / NCIMB 8711 / NCTC 7292 / S-41).